The following is a 2121-amino-acid chain: PAM2 domain-containing protein UPA2 (2121 aa).

A PAM2 1 motif is present at residues 1–17 (MEGSSLNVAAPVFKPSG). Disordered stretches follow at residues 14–46 (KPSGAANSFTPAPSQPAPPTLLSSSGPDAAVHA), 262–302 (QPED…SALT), 375–397 (AATTDHEPRSPLAHQGIPLPPST), 475–507 (ARRRGDSSDLNLRPSLKTTHNHTMSLGLPSSGG), 522–543 (ANSDEGPSKPPSEAQDLPQKPL), and 586–819 (DLGR…QFSR). The interval 339–599 (PWPYSLGLPD…GFGYEPQSPN (261 aa)) is effector domain. Polar residues predominate over residues 596–607 (QSPNAAPNGTTS). Composition is skewed to acidic residues over residues 626–637 (EENDELGFDGEE) and 646–658 (EDADASDFEEEPN). The span at 679–689 (DGHDRYADDNQ) shows a compositional bias: basic and acidic residues. The segment covering 690-712 (SHASNDDSLQDSLTPSDEQFSNP) has biased composition (polar residues). The span at 719–735 (REERILRRQHRAAERAA) shows a compositional bias: basic and acidic residues. Positions 736-745 (RRERKQRQRG) are enriched in basic residues. 2 stretches are compositionally biased toward polar residues: residues 749 to 758 (SDNTLPSSSI) and 777 to 788 (NPRNGNTISNPS). Short sequence motifs (PAM2) lie at residues 858-874 (SGISLLNPDAKEFKFGG) and 920-937 (TNAAHLNVGAAPFTPGLF). Residues 950 to 960 (NSLSASPSIAV) are compositionally biased toward polar residues. Positions 950 to 1012 (NSLSASPSIA…PSPPRPKASA (63 aa)) are disordered. Basic and acidic residues predominate over residues 966–981 (GADHRETENRDMQGRE). The PAM2 4 signature appears at 1046-1063 (SHESRLTADAPSFVPTWA). Disordered stretches follow at residues 1076 to 1096 (KRPSLPDWDQQGQQAVDKDLP), 1119 to 1261 (SKDD…EEES), and 1337 to 1369 (SHARRASDETQSTIRPLRQRNSSSDVKTANSSL). The span at 1198–1207 (HSPSISQTSD) shows a compositional bias: polar residues. Over residues 1248-1261 (GGNDEDDYEDEEES) the composition is skewed to acidic residues. A compositionally biased stretch (polar residues) spans 1345–1369 (ETQSTIRPLRQRNSSSDVKTANSSL). Positions 1783 to 2054 (LEKQAQANAD…EAKLQTLTAS (272 aa)) form a coiled coil. Residues 2099 to 2121 (SFASTAGSQGKKEVEVDEGGWWS) are disordered. The GWW signature appears at 2118-2120 (GWW).

Belongs to the UPA1 PAM2 domain-binding protein family. Might form homodimers via its C-terminal coiled-coil domain. Part of large ribonucleoprotein complexes (mRNPs) containing RNA-binding proteins RRM4 and PAB1, endosome-binding protein UPA1, core scaffold protein UPA2 and associated factor GRP1. Interacts (via PAM2 motifs) with PAB1.

It localises to the cytoplasm. Its subcellular location is the cytoskeleton. The protein localises to the endosome. Functionally, core component of endosomal mRNA transport and appears to carry out crucial scaffolding functions. The endosomal mRNA transport regulates polarity of the infectious hyphae by transporting a broad spectrum of cargo mRNAs from the nucleus to cell poles. The polypeptide is PAM2 domain-containing protein UPA2 (Mycosarcoma maydis (Corn smut fungus)).